A 207-amino-acid polypeptide reads, in one-letter code: MRQFVVIGHDVPTDPDAISLSDIPGAGRLDLLCRCVAAGVFLSHGIRERVRVHLVVADEFTVTFDADSLRHLHPDERNVAARIRDALDAQDDAIGHMPADVSPGVELRRMGLEATLDRVLDTPGTSSASADPTLVQLHEDGDPLVDAAPPTDPVFVLSDHNDFAPAERDLLADRAERRVRVGPELLHADHTVSVVHNWLDTDGYESY.

Leucine 137 contacts S-adenosyl-L-methionine.

The protein belongs to the methyltransferase superfamily. TrmY family. Homodimer.

The protein resides in the cytoplasm. It carries out the reaction pseudouridine(54) in tRNA + S-adenosyl-L-methionine = N(1)-methylpseudouridine(54) in tRNA + S-adenosyl-L-homocysteine + H(+). Specifically catalyzes the N1-methylation of pseudouridine at position 54 (Psi54) in tRNAs. The sequence is that of tRNA (pseudouridine(54)-N(1))-methyltransferase from Halorubrum lacusprofundi (strain ATCC 49239 / DSM 5036 / JCM 8891 / ACAM 34).